The chain runs to 142 residues: Hemoglobin subunit beta-2 (142 aa).

The Globin domain maps to 2–142 (SLTDEEKHLI…VTEALSCQYH (141 aa)). Positions 59 and 88 each coordinate heme b.

It belongs to the globin family. In terms of assembly, heterotetramer of two alpha chains and two beta chains. Red blood cells.

In terms of biological role, involved in oxygen transport from the lung to the various peripheral tissues. In Torpedo marmorata (Marbled electric ray), this protein is Hemoglobin subunit beta-2 (HBB2).